The following is a 313-amino-acid chain: Porphobilinogen deaminase (313 aa).

Cysteine 242 carries the post-translational modification S-(dipyrrolylmethanemethyl)cysteine.

This sequence belongs to the HMBS family. In terms of assembly, monomer. Requires dipyrromethane as cofactor.

The catalysed reaction is 4 porphobilinogen + H2O = hydroxymethylbilane + 4 NH4(+). It functions in the pathway porphyrin-containing compound metabolism; protoporphyrin-IX biosynthesis; coproporphyrinogen-III from 5-aminolevulinate: step 2/4. Functionally, tetrapolymerization of the monopyrrole PBG into the hydroxymethylbilane pre-uroporphyrinogen in several discrete steps. This is Porphobilinogen deaminase from Pseudomonas fluorescens (strain ATCC BAA-477 / NRRL B-23932 / Pf-5).